The sequence spans 453 residues: Venom prothrombin activator notecarin-D2 (453 aa).

The first 20 residues, Met1 to Ala20, serve as a signal peptide directing secretion. The propeptide occupies Glu21–Arg40. A Gla domain is found at Ser41–Asp86. Glu46, Glu47, Glu54, Glu56, Glu59, Glu60, Glu65, Glu66, Glu69, Glu72, and Glu75 each carry 4-carboxyglutamate. Cysteines 57 and 62 form a disulfide. Residues Asp86–Glu122 enclose the EGF-like 1; calcium-binding domain. 11 disulfide bridges follow: Cys90–Cys101, Cys95–Cys110, Cys112–Cys121, Cys129–Cys140, Cys136–Cys149, Cys151–Cys164, Cys172–Cys326, Cys216–Cys221, Cys236–Cys252, Cys374–Cys388, and Cys399–Cys427. A glycan (O-linked (Hex...) serine) is linked at Ser92. Residues Cys129–Cys164 form the EGF-like 2 domain. Residues Arg182–Arg209 constitute a propeptide, activation peptide. In terms of domain architecture, Peptidase S1 spans Ile210–Ser451. Residue His251 is the Charge relay system of the active site. A glycan (N-linked (GlcNAc...) asparagine) is linked at Asn254. Asp306 acts as the Charge relay system in catalysis. Ser403 acts as the Charge relay system in catalysis.

It belongs to the peptidase S1 family. Snake venom subfamily. In terms of assembly, heterodimer of a light chain and a heavy chain; disulfide-linked. Post-translationally, gamma-carboxyglutamate residues are formed by vitamin K dependent carboxylation. These residues are essential for the binding of calcium. Expressed by the venom gland.

The protein resides in the secreted. The catalysed reaction is Selective cleavage of Arg-|-Thr and then Arg-|-Ile bonds in prothrombin to form thrombin.. Functionally, snake prothrombin activator that attacks the hemostatic system of prey. This protein is functionally similar to blood coagulation factor Xa. This Notechis scutatus scutatus (Mainland tiger snake) protein is Venom prothrombin activator notecarin-D2.